The primary structure comprises 414 residues: Putative competence-damage inducible protein (414 aa).

It belongs to the CinA family.

This is Putative competence-damage inducible protein from Listeria monocytogenes serotype 4a (strain HCC23).